A 207-amino-acid chain; its full sequence is Large ribosomal subunit protein uL4 (207 aa).

The segment at 44–76 (KRRGTASAKTRSEVRGGGRKPWRQKGTGRARHG) is disordered. Over residues 60–76 (GGRKPWRQKGTGRARHG) the composition is skewed to basic residues.

Belongs to the universal ribosomal protein uL4 family. In terms of assembly, part of the 50S ribosomal subunit.

Its function is as follows. One of the primary rRNA binding proteins, this protein initially binds near the 5'-end of the 23S rRNA. It is important during the early stages of 50S assembly. It makes multiple contacts with different domains of the 23S rRNA in the assembled 50S subunit and ribosome. In terms of biological role, forms part of the polypeptide exit tunnel. This chain is Large ribosomal subunit protein uL4, found in Natranaerobius thermophilus (strain ATCC BAA-1301 / DSM 18059 / JW/NM-WN-LF).